The following is a 340-amino-acid chain: GTPase Obg (340 aa).

In terms of domain architecture, Obg spans 1-159; the sequence is MKFLDQAKVY…RTLWLRLKLI (159 aa). Positions 160 to 327 constitute an OBG-type G domain; it reads ADAGIIGLPN…LLRAGAHIIE (168 aa). GTP is bound by residues 166–173, 191–195, 212–215, 279–282, and 308–310; these read GLPNAGKS, FTTLY, DIPG, SQID, and SAV. Mg(2+) is bound by residues Ser-173 and Thr-193.

The protein belongs to the TRAFAC class OBG-HflX-like GTPase superfamily. OBG GTPase family. Monomer. The cofactor is Mg(2+).

It localises to the cytoplasm. Functionally, an essential GTPase which binds GTP, GDP and possibly (p)ppGpp with moderate affinity, with high nucleotide exchange rates and a fairly low GTP hydrolysis rate. Plays a role in control of the cell cycle, stress response, ribosome biogenesis and in those bacteria that undergo differentiation, in morphogenesis control. The sequence is that of GTPase Obg from Bartonella henselae (strain ATCC 49882 / DSM 28221 / CCUG 30454 / Houston 1) (Rochalimaea henselae).